The primary structure comprises 285 residues: NADPH-dependent 7-cyano-7-deazaguanine reductase (285 aa).

Residue 91 to 93 (IES) participates in substrate binding. 93-94 (SK) serves as a coordination point for NADPH. Cys191 functions as the Thioimide intermediate in the catalytic mechanism. Asp198 (proton donor) is an active-site residue. 230 to 231 (HE) is a substrate binding site. 259-260 (RG) lines the NADPH pocket.

This sequence belongs to the GTP cyclohydrolase I family. QueF type 2 subfamily. In terms of assembly, homodimer.

The protein localises to the cytoplasm. It carries out the reaction 7-aminomethyl-7-carbaguanine + 2 NADP(+) = 7-cyano-7-deazaguanine + 2 NADPH + 3 H(+). Its pathway is tRNA modification; tRNA-queuosine biosynthesis. Catalyzes the NADPH-dependent reduction of 7-cyano-7-deazaguanine (preQ0) to 7-aminomethyl-7-deazaguanine (preQ1). This Legionella pneumophila (strain Paris) protein is NADPH-dependent 7-cyano-7-deazaguanine reductase.